The sequence spans 1012 residues: Centriole and centriolar satellite protein OFD1 (1012 aa).

Residues 70-102 (LIGASNSLVADHLQRCGYEYSLSVFFPESGLAK) enclose the LisH domain. Coiled-coil stretches lie at residues 189-557 (QRIK…ENEV) and 622-662 (DSDL…NSAK). The tract at residues 609 to 665 (TNYPTAWVEGSSPDSDLEFVANTKARVKELQQEAERLEKAFRSYHRRVIKNSAKSPL) is mediates homooligomerization. The interval 615 to 1012 (WVEGSSPDSD…FSHEELDDSW (398 aa)) is mediates the interaction with SDCCAG8. Phosphoserine occurs at positions 663, 669, 686, and 720. The interval 719–744 (GSAASRLRGGTSSRRLSSTPLPKAKR) is disordered. The segment covering 720–737 (SAASRLRGGTSSRRLSST) has biased composition (low complexity). S735 carries the post-translational modification Phosphoserine; by PKA. 4 positions are modified to phosphoserine: S745, S774, S789, and S811. The interval 757–794 (RSHIASPSPCPDRMPLPSPTESRHSLSIPPVSSPPEQK) is disordered. The segment covering 764-774 (SPCPDRMPLPS) has biased composition (pro residues). Disordered regions lie at residues 824–904 (FESS…LQEV) and 963–1012 (KIIQ…DDSW). Residues 867–956 (SVDQKQIEEQ…IKDKSAHSEN (90 aa)) adopt a coiled-coil conformation. 2 stretches are compositionally biased toward basic and acidic residues: residues 871 to 904 (KQIE…LQEV) and 973 to 982 (SADKSSKKMV).

This sequence belongs to the OFD1 family. As to quaternary structure, homooligomer. Interacts with LCA5. Interacts with RUVBL1; the interaction is direct and may mediate interaction with the NuA4 histone acetyltransferase complex. Interacts with SDCCAG8; the interaction is direct. Interacts with MAP1LC3B. Interacts with C2CD3; OFD1 may act as a negative regulator of C2CD3. Forms a complex with KIAA0753/OFIP and CEP20/FOR20; the interaction with CEP20 is detected only in the presence of KIAA0753. Interacts with PCM1; this interaction may be mediated by KIAA0753/OFIP. Interacts with TBC1D31; regulates OFD1 activity in cilium assembly. Post-translationally, phosphorylated. Phosphorylation at Ser-735, by the cAMP-dependent protein kinase PKA, triggers ubiquitination and proteasomal degradation of OFD1. Also increases its interaction with TBC1D31 and regulates its function in ciliogenesis. In terms of processing, ubiquitinated by PJA2, upon phosphorylation at Ser-735 by PKA, leads to the proteasomal degradation of OFD1. In terms of tissue distribution, widely expressed. Expressed in 9 and 14 weeks old embryos in metanephric mesenchyme, oral mucosa, lung, heart, nasal and cranial cartilage, and brain. Expressed in metanephros, brain, tongue, and limb.

It localises to the cytoplasm. It is found in the cytoskeleton. Its subcellular location is the microtubule organizing center. The protein localises to the centrosome. The protein resides in the centriole. It localises to the cilium basal body. It is found in the nucleus. Its subcellular location is the centriolar satellite. In terms of biological role, component of the centrioles controlling mother and daughter centrioles length. Recruits to the centriole IFT88 and centriole distal appendage-specific proteins including CEP164. Involved in the biogenesis of the cilium, a centriole-associated function. The cilium is a cell surface projection found in many vertebrate cells required to transduce signals important for development and tissue homeostasis. Plays an important role in development by regulating Wnt signaling and the specification of the left-right axis. Only OFD1 localized at the centriolar satellites is removed by autophagy, which is an important step in the ciliogenesis regulation. The sequence is that of Centriole and centriolar satellite protein OFD1 (OFD1) from Homo sapiens (Human).